The chain runs to 154 residues: Ribonuclease K6 (154 aa).

Positions 1-27 (MGPHLLGRSSLLLLLLGMWWSVRPLCA) are cleaved as a signal peptide. The active-site Proton acceptor is His42. 4 disulfides stabilise this stretch: Cys50-Cys108, Cys64-Cys118, Cys82-Cys133, and Cys89-Cys96. Asn59 carries N-linked (GlcNAc...) asparagine glycosylation. Substrate is bound by residues 65-69 (KPENT) and Lys90. Residue Asn104 is glycosylated (N-linked (GlcNAc...) asparagine). The active-site Proton donor is the His149.

Belongs to the pancreatic ribonuclease family. As to quaternary structure, interacts (via N-terminus) with bacterial lipopolysaccharide (LPS). Kidney (at protein level).

The protein localises to the secreted. It is found in the lysosome. The protein resides in the cytoplasmic granule. Functionally, ribonuclease which shows a preference for the pyrimidines uridine and cytosine. Has potent antimicrobial activity against a range of Gram-positive and Gram-negative bacteria, including P.aeruginosa, A.baumanii, M.luteus, S.aureus, E.faecalis, E.faecium, S.saprophyticus and E.coli. Causes loss of bacterial membrane integrity, and also promotes agglutination of Gram-negative bacteria. Probably contributes to urinary tract sterility. Bactericidal activity is independent of RNase activity. In Bos taurus (Bovine), this protein is Ribonuclease K6 (RNASE6).